Reading from the N-terminus, the 204-residue chain is V-set and transmembrane domain-containing protein 2-like protein (204 aa).

The N-terminal stretch at 1–24 (MGAPLAVALGALHYLALFLQLGGA) is a signal peptide. The 118-residue stretch at 41–158 (ALFTETPHDM…DGKARHHKVK (118 aa)) folds into the Ig-like domain. A disulfide bridge links Cys-62 with Cys-142. A disordered region spans residues 168–204 (NSVLHLPEAPPAAPAPPPPKPGKELRKRSVDQEACSL). Residues 175–187 (EAPPAAPAPPPPK) are compositionally biased toward pro residues. Residues 188–198 (PGKELRKRSVD) show a composition bias toward basic and acidic residues.

The polypeptide is V-set and transmembrane domain-containing protein 2-like protein (VSTM2L) (Homo sapiens (Human)).